A 925-amino-acid polypeptide reads, in one-letter code: Probable dipeptidyl-aminopeptidase B (925 aa).

A disordered region spans residues 1–104; the sequence is MTPYRDVPPV…RHAQKKGPGM (104 aa). Topologically, residues 1–110 are cytoplasmic; it reads MTPYRDVPPV…GPGMDRGMRR (110 aa). The span at 31–40 shows a compositional bias: low complexity; it reads ESGSSVSTTS. Over residues 55–72 the composition is skewed to basic and acidic residues; sequence LSEKQPRGDDNEDALKDE. The chain crosses the membrane as a helical; Signal-anchor for type II membrane protein span at residues 111–131; that stretch reads ALLIAAGLLVSAWVAGLFVYI. Residues 132 to 925 lie on the Vacuolar side of the membrane; sequence ATKSYKPASA…PKPNGKRRAA (794 aa). N-linked (GlcNAc...) asparagine glycosylation is present at Asn369. The Charge relay system role is filled by Ser773. The N-linked (GlcNAc...) asparagine glycan is linked to Asn832. Catalysis depends on charge relay system residues Asp850 and His883.

Belongs to the peptidase S9B family.

It is found in the vacuole membrane. It catalyses the reaction Release of an N-terminal dipeptide, Xaa-Yaa-|-Zaa-, from a polypeptide, preferentially when Yaa is Pro, provided Zaa is neither Pro nor hydroxyproline.. Functionally, type IV dipeptidyl-peptidase which removes N-terminal dipeptides sequentially from polypeptides having unsubstituted N-termini provided that the penultimate residue is proline. This is Probable dipeptidyl-aminopeptidase B (DAPB) from Chaetomium globosum (strain ATCC 6205 / CBS 148.51 / DSM 1962 / NBRC 6347 / NRRL 1970) (Soil fungus).